The chain runs to 262 residues: Aquaporin TIP3-1 (262 aa).

Transmembrane regions (helical) follow at residues 27-47 (AAIS…GSVL) and 61-81 (GLVA…AVAV). Residues 89 to 91 (NPA) carry the NPA 1 motif. Transmembrane regions (helical) follow at residues 104–124 (LVRA…ATLL), 148–168 (AVLL…ATVI), and 175–195 (VGTI…LAGG). Residues 203 to 205 (NPA) carry the NPA 2 motif. The helical transmembrane segment at 223–243 (YWLGPFLGAGLAGLVYEYLVI) threads the bilayer.

It belongs to the MIP/aquaporin (TC 1.A.8) family. TIP (TC 1.A.8.10) subfamily.

Its subcellular location is the vacuole membrane. Its function is as follows. Aquaporins facilitate the transport of water and small neutral solutes across cell membranes. In Zea mays (Maize), this protein is Aquaporin TIP3-1 (TIP3-1).